Reading from the N-terminus, the 512-residue chain is MEELQGYLKKDRSPQQHFLYPLLLQEYIYTLAHDDSLNGSIFYEPIEFIGYDNKFSLVLVKRLIIRMYQQNFLIYLVNDSNQNRFGGHTNSFYSHFFYSQMVSKGFSVIVEIPFSLRLVSSSEEKEIPKSQNLGSIHSIFPFLEDKLSHLNNVSDILIPHPIHFEILVQILQCWIQDVPSLHLLRFFLHKYQNLNKTIQSNKTIYVFSKENKRLFWFLYNSYVSECEFLLVFFHKQSCYLRSTSSGTFLERSHFYGKMEHIIIVCCNNFHKTLWPIKDPLIHYVRYQGKAILASRGTHLLMKKWRYYFVNFWQYYFHFWSQPYRMHINSLLNYSFYFMGYLLRVLINPYAVKNQMLENSFLIDTVIKKFDTIIPIIPLIGSLSKAKFCTFSGHPISKPIWADLSDFDIIDRFGRICRNLSHYYSGSSKKQSLYRIKYILRLSCARTLARKHKSTARALLQRLGLGFLEEFFTEEEQVLSFIFPKTTLFTLHGSHRERIWSLDIIRINDLVNN.

This sequence belongs to the intron maturase 2 family. MatK subfamily.

The protein resides in the plastid. It localises to the chloroplast. Functionally, usually encoded in the trnK tRNA gene intron. Probably assists in splicing its own and other chloroplast group II introns. This Lilium longiflorum (Trumpet lily) protein is Maturase K.